The primary structure comprises 240 residues: Transcriptional regulatory protein rxt2 (240 aa).

It belongs to the RXT2 family. Component of the RPD3C(L) complex.

Its subcellular location is the nucleus. Its function is as follows. Component of the RPD3C(L) histone deacetylase complex (HDAC) responsible for the deacetylation of lysine residues on the N-terminal part of the core histones (H2A, H2B, H3 and H4). Histone deacetylation gives a tag for epigenetic repression and plays an important role in transcriptional regulation, cell cycle progression and developmental events. This is Transcriptional regulatory protein rxt2 (rtx2) from Schizosaccharomyces pombe (strain 972 / ATCC 24843) (Fission yeast).